Here is a 453-residue protein sequence, read N- to C-terminus: Gastrin/cholecystokinin type B receptor (453 aa).

The Extracellular portion of the chain corresponds to 1 to 57; that stretch reads MDLLKLNRSLQGPGPGSGSSLCRPGVSLLNSSSAGNLSCETPRIRGTGTRELELTIR. Residues asparagine 7, asparagine 30, and asparagine 36 are each glycosylated (N-linked (GlcNAc...) asparagine). Residues 58 to 79 form a helical membrane-spanning segment; that stretch reads ITLYAVIFLMSVGGNVLIIVVL. The Cytoplasmic segment spans residues 80-87; that stretch reads GLSRRLRT. Residues 88 to 109 traverse the membrane as a helical segment; sequence VTNAFLLSLAVSDLLLAVACMP. Residues 110–131 lie on the Extracellular side of the membrane; sequence FTLLPNLMGTFIFGTVICKAVS. A disulfide bridge connects residues cysteine 127 and cysteine 205. A helical membrane pass occupies residues 132-150; the sequence is YLMGVSVSVSTLNLAAIAL. At 151–170 the chain is on the cytoplasmic side; it reads ERYSAICRPLQARVWQTRSH. Residues 171-189 traverse the membrane as a helical segment; sequence AARVILATWLLSGLLMVPY. Residues 190-219 lie on the Extracellular side of the membrane; sequence PVYTVVQPVGPRILQCMHLWPSERVQQMWS. The helical transmembrane segment at 220 to 242 threads the bilayer; the sequence is VLLLILLFFIPGVVMAVAYGLIS. Residues 243–339 are Cytoplasmic-facing; that stretch reads RELYLGLRFD…KLLAKKRVVR (97 aa). The segment at 257-276 is disordered; sequence SETQSRVRNQGGLPGGAAAP. Residues 340–361 form a helical membrane-spanning segment; sequence MLLVIVLLFFVCWLPVYSANTW. The Extracellular segment spans residues 362–379; the sequence is RAFDGPGARRALAGAPIS. A helical transmembrane segment spans residues 380 to 400; sequence FIHLLSYTSACANPLVYCFMH. At 401–453 the chain is on the cytoplasmic side; the sequence is RRFRQACLDTCARCCPRPPRARPRPLPDEDPPTPSIASLSRLSYTTISTLGPG. Cysteine 414 carries the S-palmitoyl cysteine lipid modification.

This sequence belongs to the G-protein coupled receptor 1 family.

Its subcellular location is the cell membrane. In terms of biological role, receptor for gastrin and cholecystokinin. The CCK-B receptors occur throughout the central nervous system where they modulate anxiety, analgesia, arousal, and neuroleptic activity. This receptor mediates its action by association with G proteins that activate a phosphatidylinositol-calcium second messenger system. The chain is Gastrin/cholecystokinin type B receptor (Cckbr) from Mus musculus (Mouse).